Reading from the N-terminus, the 532-residue chain is Putative cysteine desulfurase PbSufS (532 aa).

An N-terminal signal peptide occupies residues 1–18; that stretch reads MNNESICILLLLFVKITS. At lysine 286 the chain carries N6-(pyridoxal phosphate)lysine. The active-site Cysteine persulfide intermediate is cysteine 480.

The protein belongs to the class-V pyridoxal-phosphate-dependent aminotransferase family. Csd subfamily. Monomer. Interacts with SufE; interaction enhances cysteine desulfurase activity of SufS. Pyridoxal 5'-phosphate serves as cofactor.

It localises to the plastid. It is found in the apicoplast. The enzyme catalyses (sulfur carrier)-H + L-cysteine = (sulfur carrier)-SH + L-alanine. Its pathway is cofactor biosynthesis; iron-sulfur cluster biosynthesis. In terms of biological role, catalyzes sulfur activation and mobilization in sulfur mobilization (SUF) pathway for iron-sulfur (Fe-S) cluster biogenesis. Active when in complex with a partner protein SufE. Required for apicoplast maintenance. Plays a role in the development of sporozoites in oocysts in mosquitoes. This Plasmodium berghei (strain Anka) protein is Putative cysteine desulfurase PbSufS.